Reading from the N-terminus, the 352-residue chain is MTVNIRNWQELKKPSNLEIKTGGDGKRKATFVAEPLERGFGLTLGNALRRVLLSSLQGAAITSIKIENVLHEFSSLAGVREDVTDIVLNVKQIALKMEGEGPKRLQLSATGPATVKAGDIMVSGDIKVMNPNHVICHLDEGATLNMELVADTGKGYVPATANRPADAPIGLIPVDSLYSPVRQVAYKVDNARIGQELDYDKLNLTVETDGTVTPEDAVAYAARILQDQLQVFVHFEEAMSDSGLIGMAAPSAASDESDVNQLNRFLLKKVDELELSVRSANCLKNDNIIYIGDLVQKTEAEMLRTPNFGRKSLNEIKEVLSSMGLRLGMDIPGWPPENIEEMAKKLEQELLG.

Residues 1–236 are alpha N-terminal domain (alpha-NTD); that stretch reads MTVNIRNWQE…DQLQVFVHFE (236 aa). The interval 257-352 is alpha C-terminal domain (alpha-CTD); that stretch reads SDVNQLNRFL…AKKLEQELLG (96 aa).

Belongs to the RNA polymerase alpha chain family. As to quaternary structure, homodimer. The RNAP catalytic core consists of 2 alpha, 1 beta, 1 beta' and 1 omega subunit. When a sigma factor is associated with the core the holoenzyme is formed, which can initiate transcription.

The catalysed reaction is RNA(n) + a ribonucleoside 5'-triphosphate = RNA(n+1) + diphosphate. Functionally, DNA-dependent RNA polymerase catalyzes the transcription of DNA into RNA using the four ribonucleoside triphosphates as substrates. This Sphingopyxis alaskensis (strain DSM 13593 / LMG 18877 / RB2256) (Sphingomonas alaskensis) protein is DNA-directed RNA polymerase subunit alpha.